The primary structure comprises 721 residues: Polyribonucleotide nucleotidyltransferase (721 aa).

Aspartate 486 and aspartate 492 together coordinate Mg(2+). In terms of domain architecture, KH spans 553 to 612; that stretch reads PKIVQLQIDIDKISLVIGSTGKTVKAITDEFEVKVQIEQNGKIILFGDDDFKMQKAKERI. Residues 622–716 form the S1 motif domain; that stretch reads GEIYEGIVKK…KFGKIDLEVV (95 aa).

This sequence belongs to the polyribonucleotide nucleotidyltransferase family. Mg(2+) serves as cofactor.

The protein localises to the cytoplasm. It carries out the reaction RNA(n+1) + phosphate = RNA(n) + a ribonucleoside 5'-diphosphate. Involved in mRNA degradation. Catalyzes the phosphorolysis of single-stranded polyribonucleotides processively in the 3'- to 5'-direction. The polypeptide is Polyribonucleotide nucleotidyltransferase (Borrelia garinii subsp. bavariensis (strain ATCC BAA-2496 / DSM 23469 / PBi) (Borreliella bavariensis)).